Consider the following 277-residue polypeptide: Pantothenate synthetase (277 aa).

Residue 26–33 (MGNLHEGH) participates in ATP binding. The active-site Proton donor is the His33. Gln57 is a binding site for (R)-pantoate. Gln57 serves as a coordination point for beta-alanine. An ATP-binding site is contributed by 144 to 147 (GKKD). Gln150 lines the (R)-pantoate pocket. ATP-binding positions include Val173 and 181-184 (LSSR).

This sequence belongs to the pantothenate synthetase family. As to quaternary structure, homodimer.

Its subcellular location is the cytoplasm. It carries out the reaction (R)-pantoate + beta-alanine + ATP = (R)-pantothenate + AMP + diphosphate + H(+). It functions in the pathway cofactor biosynthesis; (R)-pantothenate biosynthesis; (R)-pantothenate from (R)-pantoate and beta-alanine: step 1/1. In terms of biological role, catalyzes the condensation of pantoate with beta-alanine in an ATP-dependent reaction via a pantoyl-adenylate intermediate. This Paraburkholderia xenovorans (strain LB400) protein is Pantothenate synthetase.